The primary structure comprises 100 residues: Urease subunit gamma (100 aa).

Belongs to the urease gamma subunit family. In terms of assembly, heterotrimer of UreA (gamma), UreB (beta) and UreC (alpha) subunits. Three heterotrimers associate to form the active enzyme.

The protein resides in the cytoplasm. It catalyses the reaction urea + 2 H2O + H(+) = hydrogencarbonate + 2 NH4(+). Its pathway is nitrogen metabolism; urea degradation; CO(2) and NH(3) from urea (urease route): step 1/1. The sequence is that of Urease subunit gamma from Prochlorococcus marinus subsp. pastoris (strain CCMP1986 / NIES-2087 / MED4).